Consider the following 225-residue polypeptide: Phosphoserine phosphatase (225 aa).

Methionine 1 is subject to N-acetylmethionine. The Nucleophile role is filled by aspartate 20. 2 residues coordinate Mg(2+): aspartate 20 and aspartate 22. 20 to 22 (DVD) contributes to the L-serine binding site. The active-site Proton donor is the aspartate 22. Methionine 52 contacts O-phospho-L-serine. Glycine 53 is a binding site for phosphate. L-serine contacts are provided by residues 109–111 (SGG) and lysine 158. O-phospho-L-serine contacts are provided by residues 109–111 (SGG) and lysine 158. Aspartate 179 serves as a coordination point for Mg(2+). An O-phospho-L-serine-binding site is contributed by threonine 182. Threonine 182 provides a ligand contact to phosphate.

It belongs to the HAD-like hydrolase superfamily. SerB family. Homodimer. The cofactor is Mg(2+).

The protein localises to the cytoplasm. It localises to the cytosol. It catalyses the reaction O-phospho-L-serine + H2O = L-serine + phosphate. The enzyme catalyses O-phospho-D-serine + H2O = D-serine + phosphate. Its pathway is amino-acid biosynthesis; L-serine biosynthesis; L-serine from 3-phospho-D-glycerate: step 3/3. Catalyzes the last irreversible step in the biosynthesis of L-serine from carbohydrates, the dephosphorylation of O-phospho-L-serine to L-serine. L-serine can then be used in protein synthesis, to produce other amino acids, in nucleotide metabolism or in glutathione synthesis, or can be racemized to D-serine, a neuromodulator. May also act on O-phospho-D-serine. This chain is Phosphoserine phosphatase, found in Bos taurus (Bovine).